Consider the following 285-residue polypeptide: Vacuolar protein sorting-associated protein 37B (285 aa).

The interaction with IST1 stretch occupies residues 50 to 170; it reads ASNRSLAEGN…EMVLKGQRLP (121 aa). A VPS37 C-terminal domain is found at 84–173; it reads FEAYQIKKTK…LKGQRLPQAL (90 aa). The interval 175–201 is disordered; sequence PLPPRLPELAPTAPLPYPAPEASGPPA. Arg218 is modified (omega-N-methylarginine). The tract at residues 230–285 is disordered; that stretch reads GQAVPYPGLQCPPLPPRVGLPTQQGFSSQFVSPYPPPLPQRPPPRLPPHQPGFILQ. Residues 250-260 show a composition bias toward polar residues; the sequence is PTQQGFSSQFV. A compositionally biased stretch (pro residues) spans 262 to 279; that stretch reads PYPPPLPQRPPPRLPPHQ.

Belongs to the VPS37 family. Component of the ESCRT-I complex (endosomal sorting complex required for transport I) which consists of TSG101, VPS28, a VPS37 protein (VPS37A to -D) and MVB12A or MVB12B in a 1:1:1:1 stoichiometry. Interacts with TSG101, VPS28, MVB12A and MVB12B. Component of the ESCRT-I complex (endosomal sorting complex required for transport I) which consists of TSG101, VPS28, a VPS37 protein (VPS37A to -D) and UBAP1 in a 1:1:1:1 stoichiometry. Interacts with CEP55. Interacts with IST1. Widely expressed. Expressed in macrophages and lymphocytes.

It is found in the late endosome membrane. In terms of biological role, component of the ESCRT-I complex, a regulator of vesicular trafficking process. Required for the sorting of endocytic ubiquitinated cargos into multivesicular bodies. May be involved in cell growth and differentiation. This is Vacuolar protein sorting-associated protein 37B (VPS37B) from Homo sapiens (Human).